Consider the following 155-residue polypeptide: Endoribonuclease YbeY (155 aa).

The Zn(2+) site is built by H116, H120, and H126.

It belongs to the endoribonuclease YbeY family. The cofactor is Zn(2+).

The protein resides in the cytoplasm. Functionally, single strand-specific metallo-endoribonuclease involved in late-stage 70S ribosome quality control and in maturation of the 3' terminus of the 16S rRNA. The polypeptide is Endoribonuclease YbeY (Thermobifida fusca (strain YX)).